The following is a 529-amino-acid chain: Inosine-5'-monophosphate dehydrogenase (529 aa).

CBS domains follow at residues 129 to 185 (MVTD…SKQV) and 189 to 246 (MTKT…PLAT). NAD(+)-binding positions include Asp-283 and 334-336 (GVG). 2 residues coordinate K(+): Gly-336 and Gly-338. Residue Ser-339 participates in IMP binding. Cys-341 is a K(+) binding site. Catalysis depends on Cys-341, which acts as the Thioimidate intermediate. IMP-binding positions include 374–376 (DGG), 397–398 (GS), and 421–425 (YRGMG). The Proton acceptor role is filled by Arg-443. Glu-458 contacts IMP. 3 residues coordinate K(+): Glu-511, Ser-512, and His-513.

It belongs to the IMPDH/GMPR family. In terms of assembly, homotetramer. The cofactor is K(+).

It carries out the reaction IMP + NAD(+) + H2O = XMP + NADH + H(+). The protein operates within purine metabolism; XMP biosynthesis via de novo pathway; XMP from IMP: step 1/1. With respect to regulation, mycophenolic acid (MPA) is a non-competitive inhibitor that prevents formation of the closed enzyme conformation by binding to the same site as the amobile flap. In contrast, mizoribine monophosphate (MZP) is a competitive inhibitor that induces the closed conformation. MPA is a potent inhibitor of mammalian IMPDHs but a poor inhibitor of the bacterial enzymes. MZP is a more potent inhibitor of bacterial IMPDH. Functionally, catalyzes the conversion of inosine 5'-phosphate (IMP) to xanthosine 5'-phosphate (XMP), the first committed and rate-limiting step in the de novo synthesis of guanine nucleotides, and therefore plays an important role in the regulation of cell growth. The chain is Inosine-5'-monophosphate dehydrogenase from Mycobacterium leprae (strain TN).